The following is a 197-amino-acid chain: Peptidyl-tRNA hydrolase (197 aa).

Tyr-18 is a binding site for tRNA. The active-site Proton acceptor is His-23. TRNA contacts are provided by Phe-69, Asn-71, and Asn-117.

It belongs to the PTH family. In terms of assembly, monomer.

It is found in the cytoplasm. The enzyme catalyses an N-acyl-L-alpha-aminoacyl-tRNA + H2O = an N-acyl-L-amino acid + a tRNA + H(+). Its function is as follows. Hydrolyzes ribosome-free peptidyl-tRNAs (with 1 or more amino acids incorporated), which drop off the ribosome during protein synthesis, or as a result of ribosome stalling. In terms of biological role, catalyzes the release of premature peptidyl moieties from peptidyl-tRNA molecules trapped in stalled 50S ribosomal subunits, and thus maintains levels of free tRNAs and 50S ribosomes. The chain is Peptidyl-tRNA hydrolase from Tolumonas auensis (strain DSM 9187 / NBRC 110442 / TA 4).